A 450-amino-acid polypeptide reads, in one-letter code: Phosphoglucosamine mutase 2 (450 aa).

S101 acts as the Phosphoserine intermediate in catalysis. Positions 101, 245, 247, and 249 each coordinate Mg(2+). Residue S101 is modified to Phosphoserine.

The protein belongs to the phosphohexose mutase family. Mg(2+) is required as a cofactor. In terms of processing, activated by phosphorylation.

It catalyses the reaction alpha-D-glucosamine 1-phosphate = D-glucosamine 6-phosphate. In terms of biological role, catalyzes the conversion of glucosamine-6-phosphate to glucosamine-1-phosphate. The sequence is that of Phosphoglucosamine mutase 2 from Shewanella sp. (strain MR-7).